The following is a 190-amino-acid chain: UPF0301 protein PSPTO_5037 (190 aa).

Belongs to the UPF0301 (AlgH) family.

This is UPF0301 protein PSPTO_5037 from Pseudomonas syringae pv. tomato (strain ATCC BAA-871 / DC3000).